The sequence spans 538 residues: Chaperonin GroEL 1 (538 aa).

ATP is bound by residues 29-32, 86-90, Gly413, and Asp494; these read TLGP and DGTTT.

It belongs to the chaperonin (HSP60) family. Forms a cylinder of 14 subunits composed of two heptameric rings stacked back-to-back. Interacts with the co-chaperonin GroES.

The protein resides in the cytoplasm. The catalysed reaction is ATP + H2O + a folded polypeptide = ADP + phosphate + an unfolded polypeptide.. Functionally, together with its co-chaperonin GroES, plays an essential role in assisting protein folding. The GroEL-GroES system forms a nano-cage that allows encapsulation of the non-native substrate proteins and provides a physical environment optimized to promote and accelerate protein folding. In Mycolicibacterium paratuberculosis (strain ATCC BAA-968 / K-10) (Mycobacterium paratuberculosis), this protein is Chaperonin GroEL 1.